The following is a 313-amino-acid chain: Malate dehydrogenase (313 aa).

Residues 8 to 13 and Asp-33 each bind NAD(+); that span reads GAGNVG. Substrate-binding residues include Arg-83 and Arg-89. NAD(+) is bound by residues Asn-96 and 119–121; that span reads ISN. Substrate contacts are provided by Asn-121 and Arg-152. The Proton acceptor role is filled by His-176.

Belongs to the LDH/MDH superfamily. MDH type 3 family.

It carries out the reaction (S)-malate + NAD(+) = oxaloacetate + NADH + H(+). Its function is as follows. Catalyzes the reversible oxidation of malate to oxaloacetate. This chain is Malate dehydrogenase, found in Parabacteroides distasonis (strain ATCC 8503 / DSM 20701 / CIP 104284 / JCM 5825 / NCTC 11152).